The sequence spans 84 residues: UPF0298 protein NWMN_0985 (84 aa).

The protein belongs to the UPF0298 family.

The protein localises to the cytoplasm. The sequence is that of UPF0298 protein NWMN_0985 from Staphylococcus aureus (strain Newman).